Here is a 286-residue protein sequence, read N- to C-terminus: MYVTNNTALAGGAYRKRKKKFQRPKPRKRARKSKKPPKSENTYVQRFWKNPPRNYILKEPTKPISSYARWIPPEIVDVNNITVNIPNTITASRLPKTEFQETEVFKDARDQWYFPIRPSDGEHDTDVKVKKKWSLDTVLQFLQSSPKHIRQLLLTSLFGSLLGLILDTLFGGPWNLTSRLLRLIISVVPGGRILLTALDGLGYFLGNSANPIHLIENPMMQAFGNSIQKQISPRLAEDIIKAADEQIGGGFMRTIASILSAAASAGTHFTMALPAIPIAAVRPFMR.

A propeptide spans 1-12 (MYVTNNTALAGG) (removed in mature form). Residues 1 to 41 (MYVTNNTALAGGAYRKRKKKFQRPKPRKRARKSKKPPKSEN) are disordered. Basic residues predominate over residues 14-36 (YRKRKKKFQRPKPRKRARKSKKP).

Belongs to the atadenoviridae p32K protein family.

The protein resides in the virion. This is Structural protein p32K from Ovine adenovirus D serotype 7 (isolate OAV287) (OAdV-7).